Reading from the N-terminus, the 556-residue chain is MSVSAFNRRWAAVILEALTRHGVRHVCIAPGSRSTPLTLAAAENSAFIHHTHFDERGLGHLALGLAKVSKQPVAVIVTSGTAVANLYPALIEAGLTGEKLILLTADRPPELIDCGANQAIRQAGMFASHPSQTLSLPRPTQDISARWLVSTLDNVLATLHAGAVHINCPFAEPLYGDMDDTGLAWQQSLGDWWQDDKPWLREARRLESDKQRDWFFWRQKRGVVVAGRMSAEEGKKVALWAQTLGWPLIGDVLSQTGQPLPCADLWLGNAKAVTELQQAQIVVQLGSSLTGKRLLQWQAACEPEEYWIIDNIEGRLDPAHHRGRRLVAKIADWLELHPAEKRHPWCVDIPRLAEQAWQAVAARRDMFGEAQLAHRIRDYLPEQGQLFVGNSLVVRLIDALSQLPAGYPVYSNRGASGIDGLISTAAGVQRASAKSTLAIVGDLSALYDLNALALLRQVSAPFVLIVVNNNGGQIFSLLPTPQSERERFYLMPQNVHFEHAAAMFNLKYHRPQSWDELDAALAGAWRTPTTTVIELVVNDTDGAQTLQQLLAQVSHL.

This sequence belongs to the TPP enzyme family. MenD subfamily. As to quaternary structure, homodimer. Requires Mg(2+) as cofactor. The cofactor is Mn(2+). It depends on thiamine diphosphate as a cofactor.

The catalysed reaction is isochorismate + 2-oxoglutarate + H(+) = 5-enolpyruvoyl-6-hydroxy-2-succinyl-cyclohex-3-ene-1-carboxylate + CO2. It functions in the pathway quinol/quinone metabolism; 1,4-dihydroxy-2-naphthoate biosynthesis; 1,4-dihydroxy-2-naphthoate from chorismate: step 2/7. Its pathway is quinol/quinone metabolism; menaquinone biosynthesis. Its function is as follows. Catalyzes the thiamine diphosphate-dependent decarboxylation of 2-oxoglutarate and the subsequent addition of the resulting succinic semialdehyde-thiamine pyrophosphate anion to isochorismate to yield 2-succinyl-5-enolpyruvyl-6-hydroxy-3-cyclohexene-1-carboxylate (SEPHCHC). The protein is 2-succinyl-5-enolpyruvyl-6-hydroxy-3-cyclohexene-1-carboxylate synthase of Citrobacter koseri (strain ATCC BAA-895 / CDC 4225-83 / SGSC4696).